The chain runs to 96 residues: Small ribosomal subunit protein bS21 (96 aa).

Basic and acidic residues predominate over residues 37–52 (EKPSEKKAREKAEAVR). The disordered stretch occupies residues 37-96 (EKPSEKKAREKAEAVRRARKLARKKLQREGLLPSKPKPVFGADRGRGAAGGAGGAPRPAR). Positions 53-62 (RARKLARKKL) are enriched in basic residues.

Belongs to the bacterial ribosomal protein bS21 family.

The protein is Small ribosomal subunit protein bS21 of Afipia carboxidovorans (strain ATCC 49405 / DSM 1227 / KCTC 32145 / OM5) (Oligotropha carboxidovorans).